Reading from the N-terminus, the 359-residue chain is Protein mab-21-like 2-B (359 aa).

Belongs to the mab-21 family.

The protein resides in the nucleus. It is found in the cytoplasm. Its function is as follows. Required for several aspects of embryonic development including normal development of the eye. The protein is Protein mab-21-like 2-B (mab21l2-b) of Xenopus laevis (African clawed frog).